The primary structure comprises 129 residues: Small ribosomal subunit protein uS13 (129 aa).

Basic residues predominate over residues Asn-95–Arg-114. Positions Asn-95–Lys-129 are disordered.

It belongs to the universal ribosomal protein uS13 family. In terms of assembly, part of the 30S ribosomal subunit. Forms a loose heterodimer with protein S19. Forms two bridges to the 50S subunit in the 70S ribosome.

Its function is as follows. Located at the top of the head of the 30S subunit, it contacts several helices of the 16S rRNA. In the 70S ribosome it contacts the 23S rRNA (bridge B1a) and protein L5 of the 50S subunit (bridge B1b), connecting the 2 subunits; these bridges are implicated in subunit movement. Contacts the tRNAs in the A and P-sites. The chain is Small ribosomal subunit protein uS13 from Dehalococcoides mccartyi (strain ATCC BAA-2100 / JCM 16839 / KCTC 5957 / BAV1).